Here is a 313-residue protein sequence, read N- to C-terminus: Short-chain dehydrogenase/reductase family 9C member 7 (313 aa).

29–53 (FITGCDSGFGNLLAKQLVDRGMKVL) serves as a coordination point for NADP(+). Serine 160 lines the substrate pocket. Catalysis depends on tyrosine 172, which acts as the Proton acceptor. Serine 185 carries the phosphoserine modification.

It belongs to the short-chain dehydrogenases/reductases (SDR) family. As to expression, highly expressed in liver.

It localises to the cytoplasm. It catalyses the reaction a N-[omega-(9R,10R)-epoxy-(13R)-hydroxy-(11E)-octadecenoyloxy]acyl-beta-D-glucosyl-(1&lt;-&gt;1)-sphing-4E-enine + NAD(+) = a N-[omega-(9R,10R)-epoxy-13-oxo-(11E)-octadecenoyloxy]acyl-beta-D-glucosyl-(1&lt;-&gt;1)-sphing-4E-enine + NADH + H(+). It carries out the reaction a N-[omega-(9R,10R)-epoxy-(13R)-hydroxy-(11E)-octadecenoyloxy]-acylsphing-4E-enine + NAD(+) = a N-[omega-(9R,10R)-epoxy-13-oxo-(11E)-octadecenoyloxy]-acylsphing-4E-enine + NADH + H(+). Plays a crucial role in the formation of the epidermal permeability barrier. Catalyzes the NAD+-dependent dehydrogenation of the linoleate 9,10-trans-epoxy-11E-13-alcohol esterified in omega-O-acylceramides (such as in N-[omega-(9R,10R)-epoxy-(13R)-hydroxy-(11E)-octadecenoyloxy]-acylsphing-4E-enine) to the corresponding 13-ketone, the reactive moiety required for binding of epidermal ceramides to proteins. Displays weak conversion of all-trans-retinal to all-trans-retinol in the presence of NADH. Has apparently no steroid dehydrogenase activity. This chain is Short-chain dehydrogenase/reductase family 9C member 7 (Sdr9c7), found in Mus musculus (Mouse).